Reading from the N-terminus, the 594-residue chain is Probable pectinesterase/pectinesterase inhibitor 33 (594 aa).

The first 22 residues, 1-22 (MLRGIFHICLLASFLLLPFSSA), serve as a signal peptide directing secretion. The disordered stretch occupies residues 28 to 75 (FTGGTDAPPPWDHNVSPPPETAPSPTPTSSPSTTSPPSPGPVAAPSPI). Residues 34-71 (APPPWDHNVSPPPETAPSPTPTSSPSTTSPPSPGPVAA) are compositionally biased toward pro residues. Residues asparagine 77, asparagine 170, asparagine 213, and asparagine 226 are each glycosylated (N-linked (GlcNAc...) asparagine). The interval 78 to 237 (GSVSGDMTWW…SDLIGNCLAV (160 aa)) is pectinesterase inhibitor 33. Residues 280 to 581 (HLVVAQDRSG…TVGSLIAGGS (302 aa)) are pectinesterase 33. Threonine 356 and glutamine 386 together coordinate substrate. Aspartate 409 functions as the Proton donor; for pectinesterase activity in the catalytic mechanism. Cysteine 423 and cysteine 443 are disulfide-bonded. Residue aspartate 430 is the Nucleophile; for pectinesterase activity of the active site. The substrate site is built by arginine 498 and tryptophan 500.

This sequence in the N-terminal section; belongs to the PMEI family. It in the C-terminal section; belongs to the pectinesterase family. As to expression, expressed in siliques.

The protein localises to the secreted. It localises to the cell wall. It carries out the reaction [(1-&gt;4)-alpha-D-galacturonosyl methyl ester](n) + n H2O = [(1-&gt;4)-alpha-D-galacturonosyl](n) + n methanol + n H(+). It functions in the pathway glycan metabolism; pectin degradation; 2-dehydro-3-deoxy-D-gluconate from pectin: step 1/5. Acts in the modification of cell walls via demethylesterification of cell wall pectin. The protein is Probable pectinesterase/pectinesterase inhibitor 33 (PME33) of Arabidopsis thaliana (Mouse-ear cress).